The sequence spans 458 residues: Elongation factor 1-alpha (458 aa).

Gly-2 bears the N,N,N-trimethylglycine mark. The residue at position 3 (Lys-3) is an N6,N6-dimethyllysine; alternate. The residue at position 3 (Lys-3) is an N6-methyllysine; alternate. The 236-residue stretch at 5–240 folds into the tr-type G domain; that stretch reads KTHVNVVVIG…DAIEPPVRPS (236 aa). The G1 stretch occupies residues 14–21; sequence GHVDSGKS. 14-21 serves as a coordination point for GTP; sequence GHVDSGKS. Lys-30 is modified (N6-methyllysine). Residues 70–74 form a G2 region; sequence GITID. The residue at position 79 (Lys-79) is an N6,N6,N6-trimethyllysine. The interval 91-94 is G3; it reads DAPG. GTP-binding positions include 91–95 and 153–156; these read DAPGH and NKMD. The segment at 153-156 is G4; it reads NKMD. A G5 region spans residues 192–194; sequence SGW. An N6,N6-dimethyllysine; alternate modification is found at Lys-316. Position 316 is an N6-methyllysine; alternate (Lys-316). Lys-390 carries the N6-methyllysine modification.

The protein belongs to the TRAFAC class translation factor GTPase superfamily. Classic translation factor GTPase family. EF-Tu/EF-1A subfamily.

Its subcellular location is the cytoplasm. In terms of biological role, this protein promotes the GTP-dependent binding of aminoacyl-tRNA to the A-site of ribosomes during protein biosynthesis. The sequence is that of Elongation factor 1-alpha (TEF-1) from Mucor circinelloides f. lusitanicus (Mucor racemosus var. lusitanicus).